Consider the following 177-residue polypeptide: Large ribosomal subunit protein uL6 (177 aa).

This sequence belongs to the universal ribosomal protein uL6 family. In terms of assembly, part of the 50S ribosomal subunit.

Its function is as follows. This protein binds to the 23S rRNA, and is important in its secondary structure. It is located near the subunit interface in the base of the L7/L12 stalk, and near the tRNA binding site of the peptidyltransferase center. The protein is Large ribosomal subunit protein uL6 of Acinetobacter baumannii (strain SDF).